The following is a 648-amino-acid chain: Shugoshin (648 aa).

2 coiled-coil regions span residues 95–122 (LMIKITDLETKISELVQENVQLRSRLSV) and 208–273 (DDRA…KDEA). Disordered stretches follow at residues 188 to 239 (KVVG…RSSR), 262 to 334 (EADK…QEDA), 367 to 443 (VYRD…RPRR), 483 to 518 (TNRKLRKQREGVADSADVHGETDHEQDPEQSPAAED), and 628 to 648 (HRARAKAERQVGKKPAFKVST). 2 stretches are compositionally biased toward basic and acidic residues: residues 200–217 (VRGERETLDDRAQQHQEA) and 262–273 (EADKSRSAKDEA). Over residues 306 to 315 (ASGTLTQSNE) the composition is skewed to polar residues. Composition is skewed to basic and acidic residues over residues 424–440 (IVVDEVMPHNDYSDATR) and 490–509 (QREGVADSADVHGETDHEQD).

This sequence belongs to the shugoshin family.

It is found in the nucleus. Its subcellular location is the chromosome. It localises to the centromere. In terms of biological role, plays a central role in chromosome cohesion during cell division by preventing premature dissociation of cohesin complex from centromeres after prophase, when most of cohesin complex dissociates from chromosomes arms. May act by protecting RAD21 and or REC8 from cleavage by ESP1/separase. The sequence is that of Shugoshin (SGO1) from Eremothecium gossypii (strain ATCC 10895 / CBS 109.51 / FGSC 9923 / NRRL Y-1056) (Yeast).